We begin with the raw amino-acid sequence, 131 residues long: Probable ATP synthase subunit g 1, mitochondrial (131 aa).

This sequence belongs to the ATPase g subunit family. In terms of assembly, subunit of the F-type ATPase which has 2 components, CF(1) - the catalytic core - and CF(0) - the membrane proton channel.

The protein resides in the mitochondrion membrane. Mitochondrial membrane ATP synthase (F(1)F(0) ATP synthase or Complex V) produces ATP from ADP in the presence of a proton gradient across the membrane which is generated by electron transport complexes of the respiratory chain. F-type ATPases consist of two structural domains, F(1) - containing the extramembraneous catalytic core, and F(0) - containing the membrane proton channel, linked together by a central stalk and a peripheral stalk. During catalysis, ATP synthesis in the catalytic domain of F(1) is coupled via a rotary mechanism of the central stalk subunits to proton translocation. Part of the complex F(0) domain. Minor subunit located with subunit a in the membrane. This is Probable ATP synthase subunit g 1, mitochondrial from Caenorhabditis elegans.